The following is a 401-amino-acid chain: All trans-polyprenyl-diphosphate synthase PDSS2 (401 aa).

The protein belongs to the FPP/GGPP synthase family. In terms of assembly, heterotetramer composed of 2 PDSS1/DPS1 and 2 PDSS2/DLP1 subunits.

The protein localises to the mitochondrion. The catalysed reaction is 7 isopentenyl diphosphate + (2E,6E)-farnesyl diphosphate = all-trans-decaprenyl diphosphate + 7 diphosphate. It catalyses the reaction 6 isopentenyl diphosphate + (2E,6E)-farnesyl diphosphate = all-trans-nonaprenyl diphosphate + 6 diphosphate. Its pathway is cofactor biosynthesis; ubiquinone biosynthesis. Its function is as follows. Heterotetrameric enzyme that catalyzes the condensation of farnesyl diphosphate (FPP), which acts as a primer, and isopentenyl diphosphate (IPP) to produce prenyl diphosphates of varying chain lengths and participates in the determination of the side chain of ubiquinone. Supplies nona and decaprenyl diphosphate, the precursors for the side chain of the isoprenoid quinones ubiquinone-9 (Q9) and ubiquinone-10 (Q10) respectively. The enzyme adds isopentenyl diphosphate molecules sequentially to farnesyl diphosphate with trans stereochemistry. May play a role during cerebellar development. May regulate mitochondrial respiratory chain function. This chain is All trans-polyprenyl-diphosphate synthase PDSS2, found in Mus musculus (Mouse).